Reading from the N-terminus, the 164-residue chain is Photosystem II extrinsic protein V (164 aa).

The signal sequence occupies residues 1–27 (MNRISIYRIKVLAFLFAVSTYVYPASS). Cysteine 64, cysteine 67, histidine 68, and histidine 119 together coordinate heme c.

This sequence belongs to the cytochrome c family. PsbV subfamily. PSII is composed of 1 copy each of membrane proteins PsbA, PsbB, PsbC, PsbD, PsbE, PsbF, PsbH, PsbI, PsbJ, PsbK, PsbL, PsbM, PsbT, PsbY, PsbZ, Psb30/Ycf12, at least 3 peripheral proteins of the oxygen-evolving complex and a large number of cofactors. It forms dimeric complexes. The extrinsic subunits in red algae are PsbO (OEC33), PsbQ', cytochrome c-550 and PsbU. It depends on heme c as a cofactor.

It is found in the plastid. Its subcellular location is the chloroplast thylakoid membrane. One of the extrinsic, lumenal subunits of photosystem II (PSII). PSII is a light-driven water plastoquinone oxidoreductase, using light energy to abstract electrons from H(2)O, generating a proton gradient subsequently used for ATP formation. The extrinsic proteins stabilize the structure of photosystem II oxygen-evolving complex (OEC), the ion environment of oxygen evolution and protect the OEC against heat-induced inactivation. This is Photosystem II extrinsic protein V from Cyanidium caldarium (Red alga).